A 524-amino-acid polypeptide reads, in one-letter code: MDSDLISSRCVWATWNVYNGRSLSGTPLAERDGKVARKMSENGTCNRILTLESMNPCIQKVEYAVRGPIVIRAVELEKELQQGVKKPFTEVIKANIGDAHAMGQKPITFLRQVSAICLYPELMNDNKFPEDVKQKAARILQACGGHSIGAYSASQGIEVIRQDVAKYIERRDGGIQSDPNNIYLSTGASDSIVTMLKLLVSGQGKSRTGVLIPIPQYPLYSAALAELNAVQVNYYLDEENCWALDINELRRSLTEARKHCDPKVLCIINPGNPTGQVQSRKCIEDVIRFAAEENLFLMADEVYQDNVYAKGCTFHSFKKVLFEMGPKYSETVELASFHSTSKGYMGECGFRGGYMEVINMDPAVKQQLTKLVSVRLCPPVPGQALLDVIVNPPKPGEPSYKQFMAEKQAVLGNLAEKARLTEEILNQSPGIRCNPVQGAMYSFPRIHIPEKAIKLAQAEGQAPDMFFCMKLLEETGICVVPGSGFGQREGTHHFRMTILPPTDKLKSLLERLKDFHQKFTEEYS.

The residue at position 342 (lysine 342) is an N6-(pyridoxal phosphate)lysine.

It belongs to the class-I pyridoxal-phosphate-dependent aminotransferase family. Alanine aminotransferase subfamily. As to quaternary structure, homodimer. Pyridoxal 5'-phosphate is required as a cofactor.

The enzyme catalyses L-alanine + 2-oxoglutarate = pyruvate + L-glutamate. Its pathway is amino-acid degradation; L-alanine degradation via transaminase pathway; pyruvate from L-alanine: step 1/1. Its function is as follows. Catalyzes the reversible transamination between alanine and 2-oxoglutarate to form pyruvate and glutamate. This chain is Alanine aminotransferase 2 (gpt2), found in Xenopus tropicalis (Western clawed frog).